Here is a 587-residue protein sequence, read N- to C-terminus: Protein cereblon (587 aa).

Disordered regions lie at residues 1 to 56, 78 to 113, and 157 to 195; these read MDEE…PAEY, DVLQ…GLPN, and FSQE…IDIG. 2 stretches are compositionally biased toward polar residues: residues 22–31 and 86–96; these read EDQSQSQGLQ and SEGSHPSSDMS. A compositionally biased stretch (basic and acidic residues) spans 159 to 168; sequence QERRRSRTSE. The span at 170-181 shows a compositional bias: acidic residues; that stretch reads TSQEEAAEEPDD. Residues 182–191 show a composition bias toward pro residues; the sequence is PPPQQPPLPP. A Lon N-terminal domain is found at 227-453; that stretch reads HMLIFLHHHI…LIKSTFKDET (227 aa). Positions 452-561 constitute a CULT domain; it reads ETLFFCRYCN…LSGSSVRIGK (110 aa). 4 residues coordinate Zn(2+): Cys-457, Cys-460, Cys-526, and Cys-529.

The protein belongs to the CRBN family. As to quaternary structure, likely a component of a DCX (DDB1-CUL4-X-box) protein ligase complex. May interact with pic/DDB1. In terms of processing, ubiquitinated.

The protein resides in the nucleus. It functions in the pathway protein modification; protein ubiquitination. Its function is as follows. Substrate recognition component of a DCX (DDB1-CUL4-X-box) E3 protein ligase complex that mediates the ubiquitination and subsequent proteasomal degradation of target proteins. Has an essential role in mediating growth by negatively regulating insulin signaling. It also has a role in maintaining presynaptic function in the neuromuscular junction synapses of third-instar larvae. This is Protein cereblon from Drosophila simulans (Fruit fly).